The primary structure comprises 1143 residues: DNA polymerase II large subunit (1143 aa).

The protein belongs to the archaeal DNA polymerase II family. As to quaternary structure, heterodimer of a large subunit and a small subunit.

It catalyses the reaction DNA(n) + a 2'-deoxyribonucleoside 5'-triphosphate = DNA(n+1) + diphosphate. It carries out the reaction Exonucleolytic cleavage in the 3'- to 5'-direction to yield nucleoside 5'-phosphates.. Its function is as follows. Possesses two activities: a DNA synthesis (polymerase) and an exonucleolytic activity that degrades single-stranded DNA in the 3'- to 5'-direction. Has a template-primer preference which is characteristic of a replicative DNA polymerase. The chain is DNA polymerase II large subunit (polC) from Archaeoglobus fulgidus (strain ATCC 49558 / DSM 4304 / JCM 9628 / NBRC 100126 / VC-16).